Reading from the N-terminus, the 689-residue chain is MKILTKFFLLLVVTTCSLHYYCQIGQCSTQLQRVCHYTTPSVWDELLVEKNEFYREQLNPKVKVLKSHISQINSHYQDKVLPKLVDLGNRFYFDIVSPRIDNVCEFWEEFELKPYRERSLNQIRKVRQRIWFYYSVYLKPNLTKLDNQYALSDKYGKVHNKIAPFVAEIAQNFQNVYHQAAAKVHPHWENLRRTVNAKWEPISSSLWQRCRTNEICFKTNAQLKNIWKNLKLGCDYLSIYVHDALSPYSDGLESNVRATKAKSKSKPRVNASASARGNARAGAKAGAKAGTSEISASATADPTTSASATVTAGFEDDYDDEEPLYTSTSTIMLTVTMSTDQNELSPSQNTANAELGISEQDAIKDEFEAWFKVVDQKSSGVVKTFNKEVNKYLHHRVQQLDSIFQNKTKTVSEVLQNRYKNLNRAIQDINCTCETDTGAGNQTCFDSTGTTQLSEYITRSKMRELFAEAHSTLDQSMLQLKQDLEPIAQEVESRVSLIREEMVEVYEEWGDAMVSEWSKRLAYIDVVAGHLDDNGASTDEESSENWRKFLNLKKQVIKARDELAEHPADLHEIKQFVKKVHYLIEVLAKEAGEYLYILRARANLAFQAREQESKQREDSPRMDRDSTQNVENSNTTTASAEKSGKKAKKVKRVAQNGTNSTEKFSAGPDSSSKEPSMETTVQNNVTLQI.

The N-terminal stretch at 1–18 (MKILTKFFLLLVVTTCSL) is a signal peptide. Residues 259–308 (TKAKSKSKPRVNASASARGNARAGAKAGAKAGTSEISASATADPTTSASA) form a disordered region. Over residues 270-308 (NASASARGNARAGAKAGAKAGTSEISASATADPTTSASA) the composition is skewed to low complexity. Positions 406–435 (NKTKTVSEVLQNRYKNLNRAIQDINCTCET) form a coiled coil. Over residues 610–626 (EQESKQREDSPRMDRDS) the composition is skewed to basic and acidic residues. The interval 610 to 689 (EQESKQREDS…TVQNNVTLQI (80 aa)) is disordered. 3 stretches are compositionally biased toward polar residues: residues 627–637 (TQNVENSNTTT), 655–670 (QNGT…GPDS), and 677–689 (METT…TLQI).

Belongs to the SHE10 family. In terms of assembly, component of the mitochondria-localized RNase mitochondrial RNA-processing (RNase MRP) composed of one single RNA encoded by the NME1 gene and at least 31 proteins. Absent in the nucleus-localized RNase MRP (NuMRP).

The protein resides in the mitochondrion. In terms of biological role, involved in spore wall assembly. May be a component of the mitochondrial RNase MRP (MtMRP), a ribonucleoprotein endoribonuclease involved in the cleaving RNA transcripts to generate primers for DNA replication in mitochondria. This Zygosaccharomyces rouxii (strain ATCC 2623 / CBS 732 / NBRC 1130 / NCYC 568 / NRRL Y-229) protein is Outer spore wall assembly protein SHE10.